The sequence spans 489 residues: NF-kappa-B inhibitor cactus (489 aa).

The segment covering 1 to 26 (MPSPTKAAEAATKATATSDCSCSAAS) has biased composition (low complexity). Disordered stretches follow at residues 1–138 (MPSP…SMRL) and 163–203 (NNLG…APPS). Ser45 bears the Phosphoserine; by PKC mark. Positions 69-86 (NETSDSGFISGPQSSQIC) are enriched in polar residues. Ser135 carries the phosphoserine; by PKC modification. Residues 163-180 (NNLGQSSSTQITGRSKFQ) show a composition bias toward polar residues. Position 174 is a phosphothreonine; by PKC (Thr174). Residues 181 to 203 (SSTASTANANPSGXGATSSAPPS) show a composition bias toward low complexity. ANK repeat units lie at residues 220–252 (DGDTPXHLACISGSVEVVAALIRMAPHPCLLNI), 256–285 (VAQTPLHLAALTAQPNIMRILLLAGAEVRD), 287–316 (HGNTALHLSCIAGEKQCVRALTEEFGATEI), 350–379 (DGERCVHLAAEAGHIDILRILVSHGADINA), and 384–413 (SGRTPLHIAIEGCNEDLANFLLDECEKLNL). Thr308 is subject to Phosphothreonine; by PKC. Ser384 carries the phosphoserine; by PKC modification.

The protein resides in the cytoplasm. Its function is as follows. Involved in the formation of the dorsoventral pattern. It inhibits nuclear translocation of the dorsal morphogen in the dorsal region of the embryo. This is NF-kappa-B inhibitor cactus (cact) from Drosophila yakuba (Fruit fly).